A 465-amino-acid polypeptide reads, in one-letter code: FAD-dependent monooxygenase penM (465 aa).

A helical transmembrane segment spans residues 5–25; that stretch reads QFHVIIVGGSIAGLTLAHCLH. The FAD site is built by glutamate 35, glycine 49, arginine 108, aspartate 299, and alanine 312. A helical transmembrane segment spans residues 435 to 455; sequence VLVLLLSALTWSCLGNMNIIM.

This sequence belongs to the paxM FAD-dependent monooxygenase family. FAD is required as a cofactor.

It is found in the membrane. Its pathway is secondary metabolite biosynthesis. Functionally, FAD-dependent monooxygenase; part of the gene cluster that mediates the biosynthesis of the indole diterpenes penitrems. The geranylgeranyl diphosphate (GGPP) synthase penG catalyzes the first step in penitrem biosynthesis via conversion of farnesyl pyrophosphate and isopentyl pyrophosphate into geranylgeranyl pyrophosphate (GGPP). Condensation of indole-3-glycerol phosphate with GGPP by the prenyl transferase penC then forms 3-geranylgeranylindole (3-GGI). Epoxidation by the FAD-dependent monooxygenase penM leads to a epoxidized-GGI that is substrate of the terpene cyclase penB for cyclization to yield paspaline. Paspaline is subsequently converted to 13-desoxypaxilline by the cytochrome P450 monooxygenase penP, the latter being then converted to paxilline by the cytochrome P450 monooxygenase penQ. Paxilline is converted to beta-paxitriol via C-10 ketoreduction by the short-chain dehydrogenase PC-15 which can be monoprenylated at the C-20 by the indole diterpene prenyltransferase penD. A two-step elimination (acetylation and elimination) process performed by the O-acetyltransferase PC-16 and the P.simplicissimum ptmI-ortholog not yet identified in P.crustosum, leads to the production of the prenylated form of penijanthine. The FAD-linked oxidoreductase ptmO then converts the prenylated form of penijanthine into PC-M5 which is in turn transformed into PC-M4 by the aromatic dimethylallyltransferase PC-22. A series of oxidation steps involving 4 cytochrome P450 monooxygenases (PC-21, PC-05, PC-23, PC-20) and a FAD-dependent monooxygenase (PC-14) are required for the transformation of PC-M4 to penitrems A and E. Synthesis of these final products is proposed to proceed via penitrems D and C (PC-21, PC-05, PC-14) and penitrems B and F (PC-21, PC-05, PC-14, PC-23). The chain is FAD-dependent monooxygenase penM from Penicillium crustosum (Blue mold fungus).